We begin with the raw amino-acid sequence, 318 residues long: Zinc chaperone YjiA (318 aa).

11–19 (GFLGAGKTT) contributes to the GTP binding site. Zn(2+) contacts are provided by Glu37, Glu42, Cys66, Glu74, and His114. Residues 64-67 (CICC) carry the CXCC motif motif. Asp161 is a GTP binding site. Zn(2+) contacts are provided by Glu167, His170, and His187. Residues 224 to 315 (ISSIVVELDY…EEEIRAAFAG (92 aa)) form the CobW C-terminal domain.

It belongs to the SIMIBI class G3E GTPase family. ZNG1 subfamily. As to quaternary structure, monomer in the apo form. Metal binding induces oligomerization. Forms homodimers and higher oligomers.

It carries out the reaction GTP + H2O = GDP + phosphate + H(+). With respect to regulation, GTPase activity is inhibited by metal binding. Activity is decreased in the presence of Co(II) or Ni(II), and is completely inhibited in the presence of Zn(II). In terms of biological role, zinc chaperone that directly transfers zinc cofactor to target proteins, thereby activating them. Zinc is transferred from the CXCC motif in the GTPase domain to the zinc binding site in target proteins in a process requiring GTP hydrolysis. The protein is Zinc chaperone YjiA (yjiA) of Escherichia coli (strain K12).